A 131-amino-acid chain; its full sequence is Small ribosomal subunit protein uS11 (131 aa).

The protein belongs to the universal ribosomal protein uS11 family. In terms of assembly, part of the 30S ribosomal subunit. Interacts with proteins S7 and S18. Binds to IF-3.

In terms of biological role, located on the platform of the 30S subunit, it bridges several disparate RNA helices of the 16S rRNA. Forms part of the Shine-Dalgarno cleft in the 70S ribosome. The chain is Small ribosomal subunit protein uS11 from Helicobacter pylori (strain ATCC 700392 / 26695) (Campylobacter pylori).